Reading from the N-terminus, the 156-residue chain is Acyl carrier protein, mitochondrial (156 aa).

A mitochondrion-targeting transit peptide spans 1–68; the sequence is MASRVLCACV…GTVTHLCRQY (68 aa). Residues 77-152 form the Carrier domain; sequence DGIKDRVLYV…EIVDYIADKK (76 aa). Lysine 88 is subject to N6-acetyllysine. Serine 112 carries the O-(pantetheine 4'-phosphoryl)serine modification.

This sequence belongs to the acyl carrier protein (ACP) family. In terms of assembly, mammalian complex I is composed of 45 different subunits. Interacts with ETFRF1. Identified in a complex composed of MALSU1, MIEF1 upstream open reading frame protein and NDUFAB1; within the trimeric complex, MIEF1 upstream open reading frame protein functions as a bridging scaffold that interacts with MALSU1 on one side, and with NDUFAB1 on the other side. The complex interacts with the mitochondrial large ribosomal subunit. Interacts with alpha-1-microglobulin chain; this interaction is required for the maintenance of mitochondrial redox homeostasis. Component of the mitochondrial core iron-sulfur cluster (ISC) complex composed of NFS1, LYRM4, NDUFAB1, ISCU, FXN, and FDX2; this complex is a heterohexamer containing two copies of each monomer. Component of the cyteine desulfurase complex composed of NFS1, LYRM4 and NDUFAB1; this complex contributes to the stability and cysteine desulfurase activity of NFS1. In terms of processing, phosphopantetheinylation at Ser-112 is essential for interactions with LYR motif-containing proteins.

Its subcellular location is the mitochondrion. In terms of biological role, carrier of the growing fatty acid chain in fatty acid biosynthesis. Accessory and non-catalytic subunit of the mitochondrial membrane respiratory chain NADH dehydrogenase (Complex I), which functions in the transfer of electrons from NADH to the respiratory chain. Accessory protein, of the core iron-sulfur cluster (ISC) assembly complex, that regulates, in association with LYRM4, the stability and the cysteine desulfurase activity of NFS1 and participates in the [2Fe-2S] clusters assembly on the scaffolding protein ISCU. The core iron-sulfur cluster (ISC) assembly complex is involved in the de novo synthesis of a [2Fe-2S] cluster, the first step of the mitochondrial iron-sulfur protein biogenesis. This process is initiated by the cysteine desulfurase complex (NFS1:LYRM4:NDUFAB1) that produces persulfide which is delivered on the scaffold protein ISCU in a FXN-dependent manner. Then this complex is stabilized by FDX2 which provides reducing equivalents to accomplish the [2Fe-2S] cluster assembly. Finally, the [2Fe-2S] cluster is transferred from ISCU to chaperone proteins, including HSCB, HSPA9 and GLRX5. The sequence is that of Acyl carrier protein, mitochondrial from Mus musculus (Mouse).